The chain runs to 442 residues: C4-dicarboxylate transport protein (442 aa).

The next 8 helical transmembrane spans lie at 10 to 30 (VQVL…PSFG), 40 to 60 (FIKL…VSGI), 77 to 97 (LIYF…VANI), 149 to 169 (LLQV…LGTL), 185 to 205 (FVIL…AMAF), 221 to 241 (LMVA…GLIA), 288 to 308 (VVGL…SIYL), and 354 to 374 (AATL…ILGI). The tract at residues 420-442 (PATPEVAAEERGEGRGLDGPLPA) is disordered.

It belongs to the dicarboxylate/amino acid:cation symporter (DAACS) (TC 2.A.23) family.

It localises to the cell membrane. Responsible for the transport of dicarboxylates such as succinate, fumarate, and malate across the membrane. The chain is C4-dicarboxylate transport protein from Deinococcus geothermalis (strain DSM 11300 / CIP 105573 / AG-3a).